The sequence spans 95 residues: Aspartyl/glutamyl-tRNA(Asn/Gln) amidotransferase subunit C (95 aa).

The protein belongs to the GatC family. Heterotrimer of A, B and C subunits.

It catalyses the reaction L-glutamyl-tRNA(Gln) + L-glutamine + ATP + H2O = L-glutaminyl-tRNA(Gln) + L-glutamate + ADP + phosphate + H(+). The enzyme catalyses L-aspartyl-tRNA(Asn) + L-glutamine + ATP + H2O = L-asparaginyl-tRNA(Asn) + L-glutamate + ADP + phosphate + 2 H(+). Functionally, allows the formation of correctly charged Asn-tRNA(Asn) or Gln-tRNA(Gln) through the transamidation of misacylated Asp-tRNA(Asn) or Glu-tRNA(Gln) in organisms which lack either or both of asparaginyl-tRNA or glutaminyl-tRNA synthetases. The reaction takes place in the presence of glutamine and ATP through an activated phospho-Asp-tRNA(Asn) or phospho-Glu-tRNA(Gln). The polypeptide is Aspartyl/glutamyl-tRNA(Asn/Gln) amidotransferase subunit C (Syntrophotalea carbinolica (strain DSM 2380 / NBRC 103641 / GraBd1) (Pelobacter carbinolicus)).